Reading from the N-terminus, the 287-residue chain is Glycine--tRNA ligase alpha subunit (287 aa).

This sequence belongs to the class-II aminoacyl-tRNA synthetase family. Tetramer of two alpha and two beta subunits.

The protein resides in the cytoplasm. It carries out the reaction tRNA(Gly) + glycine + ATP = glycyl-tRNA(Gly) + AMP + diphosphate. In Campylobacter jejuni subsp. doylei (strain ATCC BAA-1458 / RM4099 / 269.97), this protein is Glycine--tRNA ligase alpha subunit.